Consider the following 322-residue polypeptide: tRNA dimethylallyltransferase (322 aa).

18 to 25 (GPTASGKS) is a binding site for ATP. 20–25 (TASGKS) serves as a coordination point for substrate. Interaction with substrate tRNA stretches follow at residues 43 to 46 (DSRQ) and 167 to 171 (QRLVR).

The protein belongs to the IPP transferase family. As to quaternary structure, monomer. Mg(2+) is required as a cofactor.

It catalyses the reaction adenosine(37) in tRNA + dimethylallyl diphosphate = N(6)-dimethylallyladenosine(37) in tRNA + diphosphate. Its function is as follows. Catalyzes the transfer of a dimethylallyl group onto the adenine at position 37 in tRNAs that read codons beginning with uridine, leading to the formation of N6-(dimethylallyl)adenosine (i(6)A). This Chlorobium phaeobacteroides (strain BS1) protein is tRNA dimethylallyltransferase.